Reading from the N-terminus, the 211-residue chain is Thiamine-phosphate synthase (211 aa).

4-amino-2-methyl-5-(diphosphooxymethyl)pyrimidine contacts are provided by residues Gln-39–Lys-43 and Asn-71. The Mg(2+) site is built by Asp-72 and Asp-91. Ser-110 contributes to the 4-amino-2-methyl-5-(diphosphooxymethyl)pyrimidine binding site. Position 136-138 (Thr-136–Thr-138) interacts with 2-[(2R,5Z)-2-carboxy-4-methylthiazol-5(2H)-ylidene]ethyl phosphate. Position 139 (Lys-139) interacts with 4-amino-2-methyl-5-(diphosphooxymethyl)pyrimidine. 2-[(2R,5Z)-2-carboxy-4-methylthiazol-5(2H)-ylidene]ethyl phosphate is bound by residues Ala-167 and Val-187–Ser-188.

It belongs to the thiamine-phosphate synthase family. It depends on Mg(2+) as a cofactor.

It catalyses the reaction 2-[(2R,5Z)-2-carboxy-4-methylthiazol-5(2H)-ylidene]ethyl phosphate + 4-amino-2-methyl-5-(diphosphooxymethyl)pyrimidine + 2 H(+) = thiamine phosphate + CO2 + diphosphate. The enzyme catalyses 2-(2-carboxy-4-methylthiazol-5-yl)ethyl phosphate + 4-amino-2-methyl-5-(diphosphooxymethyl)pyrimidine + 2 H(+) = thiamine phosphate + CO2 + diphosphate. It carries out the reaction 4-methyl-5-(2-phosphooxyethyl)-thiazole + 4-amino-2-methyl-5-(diphosphooxymethyl)pyrimidine + H(+) = thiamine phosphate + diphosphate. It participates in cofactor biosynthesis; thiamine diphosphate biosynthesis; thiamine phosphate from 4-amino-2-methyl-5-diphosphomethylpyrimidine and 4-methyl-5-(2-phosphoethyl)-thiazole: step 1/1. Its function is as follows. Condenses 4-methyl-5-(beta-hydroxyethyl)thiazole monophosphate (THZ-P) and 2-methyl-4-amino-5-hydroxymethyl pyrimidine pyrophosphate (HMP-PP) to form thiamine monophosphate (TMP). The sequence is that of Thiamine-phosphate synthase from Solidesulfovibrio magneticus (strain ATCC 700980 / DSM 13731 / RS-1) (Desulfovibrio magneticus).